A 256-amino-acid polypeptide reads, in one-letter code: Ribosomal RNA small subunit methyltransferase A (256 aa).

S-adenosyl-L-methionine is bound by residues N12, L14, G39, E60, D85, and N103.

The protein belongs to the class I-like SAM-binding methyltransferase superfamily. rRNA adenine N(6)-methyltransferase family. RsmA subfamily.

Its subcellular location is the cytoplasm. The enzyme catalyses adenosine(1518)/adenosine(1519) in 16S rRNA + 4 S-adenosyl-L-methionine = N(6)-dimethyladenosine(1518)/N(6)-dimethyladenosine(1519) in 16S rRNA + 4 S-adenosyl-L-homocysteine + 4 H(+). In terms of biological role, specifically dimethylates two adjacent adenosines (A1518 and A1519) in the loop of a conserved hairpin near the 3'-end of 16S rRNA in the 30S particle. May play a critical role in biogenesis of 30S subunits. The protein is Ribosomal RNA small subunit methyltransferase A of Legionella pneumophila subsp. pneumophila (strain Philadelphia 1 / ATCC 33152 / DSM 7513).